A 320-amino-acid chain; its full sequence is NAC domain-containing protein 20 (320 aa).

Positions 14–170 constitute an NAC domain; that stretch reads LPPGFRFHPT…DWAVCRIFHK (157 aa). Residues 114–176 mediate DNA binding; the sequence is IGMKKTLVFY…IFHKSSGIKK (63 aa).

Forms homodimers. Forms heterodimers with NAC26. As to expression, expressed in developing seeds.

The protein resides in the nucleus. The protein localises to the endoplasmic reticulum. Functionally, transcription factor that acts redundantly with NAC26 to regulate the expression of genes involved in the biosynthesis of starch and storage proteins in grain. Directly binds to the promoters of starch synthase 1 (SS1), pullulanase (PUL), glutelin A1 (GLUA1), glutelins B4 and B5 (GLUB4 and GLUB5), alpha-globulin and 16 kDa prolamin, and activates their expression. Possesses transactivation activity in yeast. This chain is NAC domain-containing protein 20, found in Oryza sativa subsp. indica (Rice).